The primary structure comprises 222 residues: Extracellular protein ARB_03106 (222 aa).

Positions 1-18 (MRLHSVLAVATAVGCAVA) are cleaved as a signal peptide. Residues asparagine 113 and asparagine 126 are each glycosylated (N-linked (GlcNAc...) asparagine).

The protein localises to the secreted. The protein is Extracellular protein ARB_03106 of Arthroderma benhamiae (strain ATCC MYA-4681 / CBS 112371) (Trichophyton mentagrophytes).